The sequence spans 396 residues: Cytochrome b (396 aa).

A run of 4 helical transmembrane segments spans residues 37–57 (FGSL…ILAM), 81–102 (WLMR…YAHI), 117–137 (WNVG…GYVL), and 182–202 (FFTF…IHIM). Heme b contacts are provided by His-87 and His-101. 2 residues coordinate heme b: His-186 and His-200. His-205 provides a ligand contact to a ubiquinone. The next 4 helical transmembrane spans lie at 230–250 (FKDI…SLLP), 292–312 (LGGV…PFTH), 324–344 (LAQV…WLGG), and 351–371 (FILM…LIFP).

Belongs to the cytochrome b family. As to quaternary structure, the cytochrome bc1 complex contains 3 respiratory subunits (MT-CYB, CYC1 and UQCRFS1), 2 core proteins (UQCRC1 and UQCRC2) and probably 6 low-molecular weight proteins. The cofactor is heme b.

The protein resides in the mitochondrion inner membrane. In terms of biological role, component of the ubiquinol-cytochrome c reductase complex (complex III or cytochrome b-c1 complex) that is part of the mitochondrial respiratory chain. The b-c1 complex mediates electron transfer from ubiquinol to cytochrome c. Contributes to the generation of a proton gradient across the mitochondrial membrane that is then used for ATP synthesis. The chain is Cytochrome b (mt-cyb) from Lampetra fluviatilis (European river lamprey).